The primary structure comprises 132 residues: Large ribosomal subunit protein bL21 (132 aa).

Residues 104-132 form a disordered region; that stretch reads GKAPSIGPRPPREKKPVVETSAEADDAAA.

Belongs to the bacterial ribosomal protein bL21 family. As to quaternary structure, part of the 50S ribosomal subunit. Contacts protein L20.

In terms of biological role, this protein binds to 23S rRNA in the presence of protein L20. This Rhodopseudomonas palustris (strain BisB18) protein is Large ribosomal subunit protein bL21.